Consider the following 126-residue polypeptide: Holo-[acyl-carrier-protein] synthase (126 aa).

Aspartate 9 and glutamate 57 together coordinate Mg(2+).

This sequence belongs to the P-Pant transferase superfamily. AcpS family. It depends on Mg(2+) as a cofactor.

It localises to the cytoplasm. The catalysed reaction is apo-[ACP] + CoA = holo-[ACP] + adenosine 3',5'-bisphosphate + H(+). Its function is as follows. Transfers the 4'-phosphopantetheine moiety from coenzyme A to a Ser of acyl-carrier-protein. In Idiomarina loihiensis (strain ATCC BAA-735 / DSM 15497 / L2-TR), this protein is Holo-[acyl-carrier-protein] synthase.